The primary structure comprises 318 residues: MHSQTTKDEQSKDDSSNEKQDAIERRRLQNRLSQRNHRRKIRDRIAKLQERVIASELRAVATLNGWDQASPPAASMMESKPQGDFDSNPLASVSEDPAISNPPQRNVSSNLCRSCCSLLNQMPSSSSLPSPTSPLPFDLGLTNGVDSTNSSPSTLLNSSPSSSQLSPFSLDTSLSMTGLQSQNEFSFPPYPDPPGSQQYPHCPQYYVATEASLPHIMQRLGSATSHPKAIILIPHGHGYAPAPFTGANAADSTGLRSALNGNLNLQNPGRHCLRPDRSAKSSDLGTSGDWMTAPSSTPFCPLHPSQSSSLDNYQSMML.

A compositionally biased stretch (basic and acidic residues) spans 1–27 (MHSQTTKDEQSKDDSSNEKQDAIERRR). The segment at 1–39 (MHSQTTKDEQSKDDSSNEKQDAIERRRLQNRLSQRNHRR) is disordered. A bZIP domain is found at 20–52 (QDAIERRRLQNRLSQRNHRRKIRDRIAKLQERV). A basic motif region spans residues 25 to 40 (RRRLQNRLSQRNHRRK). Residues 41–48 (IRDRIAKL) are leucine-zipper. 3 disordered regions span residues 71 to 107 (PPAASMMESKPQGDFDSNPLASVSEDPAISNPPQRNV), 123 to 171 (PSSS…FSLD), and 269 to 318 (GRHC…SMML). Composition is skewed to low complexity over residues 123–139 (PSSSSLPSPTSPLPFDL) and 147–171 (STNSSPSTLLNSSPSSSQLSPFSLD). A compositionally biased stretch (polar residues) spans 293-318 (APSSTPFCPLHPSQSSSLDNYQSMML).

This sequence belongs to the bZIP family.

It localises to the nucleus. Its function is as follows. Transcription regulator that specifically up-regulates the gene cluster that mediates the biosynthesis of the isocyanide xanthocillin and its derivatives. The polypeptide is Xanthocillin biosynthesis cluster transcription factor xanC (Aspergillus fumigatus (strain ATCC MYA-4609 / CBS 101355 / FGSC A1100 / Af293) (Neosartorya fumigata)).